Reading from the N-terminus, the 94-residue chain is MRTLAILAAILLVALQAQAEPLQARADEVAAAPEQIAADIPEVVVSLAWDESLAPKHPGSRKNMACYCRIPACIAGERRYGTCIYQGRLWAFCC.

The N-terminal stretch at 1–19 (MRTLAILAAILLVALQAQA) is a signal peptide. Positions 20-38 (EPLQARADEVAAAPEQIAA) are excised as a propeptide. 3 disulfide bridges follow: C66–C94, C68–C83, and C73–C93. At R78 the chain carries ADP-ribosylarginine; by ART1. Y85 is modified (phosphotyrosine). At R88 the chain carries ADP-ribosylarginine; by ART1.

The protein belongs to the alpha-defensin family. Tetramer. Dimer. Interacts with RETN. As to quaternary structure, (Microbial infection) Interacts with HIV-1 surface protein gp120. In terms of assembly, (Microbial infection) Interacts with herpes virus 1 (HHV1) envelope glycoprotein B; this interaction inhibits viral infection. ADP-ribosylation drastically reduces cytotoxic and antibacterial activities, and enhances IL8 production. Post-translationally, phosphorylation at Tyr-85 has been found in some cancer cell lines, and interferes with ADP-ribosylation.

It localises to the secreted. In terms of biological role, effector molecule of the innate immune system that acts via antibiotic-like properties against a broad array of infectious agents including bacteria, fungi, and viruses or by promoting the activation and maturation of some APCs. Interacts with the essential precursor of cell wall synthesis lipid II to inhibit bacterial cell wall synthesis. Inhibits adenovirus infection via inhibition of viral disassembly at the vertex region, thereby restricting the release of internal capsid protein pVI, which is required for endosomal membrane penetration during cell entry. In addition, interaction with adenovirus capsid leads to the redirection of viral particles to TLR4 thereby promoting a NLRP3-mediated inflammasome response and interleukin 1-beta (IL-1beta) release. Induces the production of proinflammatory cytokines including type I interferon (IFN) in plasmacytoid dendritic cells (pDCs) by triggering the degradation of NFKBIA and nuclear translocation of IRF1, both of which are required for activation of pDCs. The sequence is that of Neutrophil defensin 1 (DEFA1) from Homo sapiens (Human).